The following is a 240-amino-acid chain: UDP-2,3-diacylglucosamine hydrolase (240 aa).

Mn(2+)-binding residues include D9, H11, D43, N81, and H116. Residue 81–82 participates in substrate binding; it reads NR. Substrate is bound by residues D124, S162, K166, K169, and H197. Positions 197 and 199 each coordinate Mn(2+).

The protein belongs to the LpxH family. It depends on Mn(2+) as a cofactor.

The protein localises to the cell inner membrane. It carries out the reaction UDP-2-N,3-O-bis[(3R)-3-hydroxytetradecanoyl]-alpha-D-glucosamine + H2O = 2-N,3-O-bis[(3R)-3-hydroxytetradecanoyl]-alpha-D-glucosaminyl 1-phosphate + UMP + 2 H(+). It participates in glycolipid biosynthesis; lipid IV(A) biosynthesis; lipid IV(A) from (3R)-3-hydroxytetradecanoyl-[acyl-carrier-protein] and UDP-N-acetyl-alpha-D-glucosamine: step 4/6. Its function is as follows. Hydrolyzes the pyrophosphate bond of UDP-2,3-diacylglucosamine to yield 2,3-diacylglucosamine 1-phosphate (lipid X) and UMP by catalyzing the attack of water at the alpha-P atom. Involved in the biosynthesis of lipid A, a phosphorylated glycolipid that anchors the lipopolysaccharide to the outer membrane of the cell. The chain is UDP-2,3-diacylglucosamine hydrolase from Neisseria meningitidis serogroup A / serotype 4A (strain DSM 15465 / Z2491).